Here is a 231-residue protein sequence, read N- to C-terminus: Aquaporin Z (231 aa).

2 consecutive transmembrane segments (helical) span residues 9-29 (LLGT…AAAF) and 34-54 (IGFV…IYAV). The short motif at 63 to 65 (NPA) is the NPA 1 element. 3 consecutive transmembrane segments (helical) span residues 82-102 (IPYI…LYVI), 133-153 (SAIV…IGAT), and 160-180 (GFAP…SIPI). The NPA 2 motif lies at 186–188 (NPA). A helical membrane pass occupies residues 202–222 (LEQLWFFWVMPIIGGIVGGGI).

It belongs to the MIP/aquaporin (TC 1.A.8) family. In terms of assembly, homotetramer.

The protein localises to the cell inner membrane. The enzyme catalyses H2O(in) = H2O(out). Channel that permits osmotically driven movement of water in both directions. It is involved in the osmoregulation and in the maintenance of cell turgor during volume expansion in rapidly growing cells. It mediates rapid entry or exit of water in response to abrupt changes in osmolarity. The protein is Aquaporin Z of Photorhabdus laumondii subsp. laumondii (strain DSM 15139 / CIP 105565 / TT01) (Photorhabdus luminescens subsp. laumondii).